A 77-amino-acid polypeptide reads, in one-letter code: Liver-expressed antimicrobial peptide 2 (77 aa).

Positions methionine 1 to glycine 22 are cleaved as a signal peptide. The propeptide occupies serine 23–arginine 37. 2 cysteine pairs are disulfide-bonded: cysteine 54-cysteine 65 and cysteine 60-cysteine 70.

The protein belongs to the LEAP2 family.

Its subcellular location is the secreted. Functionally, has an antimicrobial activity. This Bos taurus (Bovine) protein is Liver-expressed antimicrobial peptide 2 (LEAP2).